Reading from the N-terminus, the 170-residue chain is Probable inosine/xanthosine triphosphatase (170 aa).

7–12 lines the substrate pocket; sequence TTNPVK. Asp37 is a binding site for Mg(2+).

The protein belongs to the YjjX NTPase family. As to quaternary structure, homodimer. It depends on Mg(2+) as a cofactor. Mn(2+) is required as a cofactor.

It carries out the reaction XTP + H2O = XDP + phosphate + H(+). The enzyme catalyses ITP + H2O = IDP + phosphate + H(+). Functionally, phosphatase that hydrolyzes non-canonical purine nucleotides such as XTP and ITP to their respective diphosphate derivatives. Probably excludes non-canonical purines from DNA/RNA precursor pool, thus preventing their incorporation into DNA/RNA and avoiding chromosomal lesions. This is Probable inosine/xanthosine triphosphatase from Methanopyrus kandleri (strain AV19 / DSM 6324 / JCM 9639 / NBRC 100938).